A 132-amino-acid polypeptide reads, in one-letter code: Small ribosomal subunit protein uS8 (132 aa).

The protein belongs to the universal ribosomal protein uS8 family. Part of the 30S ribosomal subunit. Contacts proteins S5 and S12.

One of the primary rRNA binding proteins, it binds directly to 16S rRNA central domain where it helps coordinate assembly of the platform of the 30S subunit. This is Small ribosomal subunit protein uS8 from Paenarthrobacter aurescens (strain TC1).